Here is a 435-residue protein sequence, read N- to C-terminus: Glutamate-1-semialdehyde 2,1-aminomutase (435 aa).

Lysine 266 bears the N6-(pyridoxal phosphate)lysine mark.

This sequence belongs to the class-III pyridoxal-phosphate-dependent aminotransferase family. HemL subfamily. Homodimer. Pyridoxal 5'-phosphate is required as a cofactor.

It localises to the cytoplasm. It catalyses the reaction (S)-4-amino-5-oxopentanoate = 5-aminolevulinate. It functions in the pathway porphyrin-containing compound metabolism; protoporphyrin-IX biosynthesis; 5-aminolevulinate from L-glutamyl-tRNA(Glu): step 2/2. The polypeptide is Glutamate-1-semialdehyde 2,1-aminomutase (Nitrosomonas europaea (strain ATCC 19718 / CIP 103999 / KCTC 2705 / NBRC 14298)).